The chain runs to 532 residues: 2,3-bisphosphoglycerate-independent phosphoglycerate mutase (532 aa).

The Mn(2+) site is built by D13 and S63. The active-site Phosphoserine intermediate is the S63. Substrate contacts are provided by residues H124, 154–155 (RD), R187, R193, 262–265 (RPDR), and K343. The Mn(2+) site is built by D421, H425, D463, H464, and H481.

Belongs to the BPG-independent phosphoglycerate mutase family. Monomer. Mn(2+) serves as cofactor.

The catalysed reaction is (2R)-2-phosphoglycerate = (2R)-3-phosphoglycerate. The protein operates within carbohydrate degradation; glycolysis; pyruvate from D-glyceraldehyde 3-phosphate: step 3/5. Functionally, catalyzes the interconversion of 2-phosphoglycerate and 3-phosphoglycerate. In Mesoplasma florum (strain ATCC 33453 / NBRC 100688 / NCTC 11704 / L1) (Acholeplasma florum), this protein is 2,3-bisphosphoglycerate-independent phosphoglycerate mutase.